Consider the following 260-residue polypeptide: Adenosylcobinamide-GDP ribazoletransferase (260 aa).

6 helical membrane passes run Ala-40 to Leu-60, Thr-64 to Leu-84, Tyr-117 to Ile-137, Pro-142 to Trp-162, His-188 to Leu-208, and Pro-210 to Arg-230.

The protein belongs to the CobS family. It depends on Mg(2+) as a cofactor.

The protein resides in the cell inner membrane. It carries out the reaction alpha-ribazole + adenosylcob(III)inamide-GDP = adenosylcob(III)alamin + GMP + H(+). The enzyme catalyses alpha-ribazole 5'-phosphate + adenosylcob(III)inamide-GDP = adenosylcob(III)alamin 5'-phosphate + GMP + H(+). Its pathway is cofactor biosynthesis; adenosylcobalamin biosynthesis; adenosylcobalamin from cob(II)yrinate a,c-diamide: step 7/7. Functionally, joins adenosylcobinamide-GDP and alpha-ribazole to generate adenosylcobalamin (Ado-cobalamin). Also synthesizes adenosylcobalamin 5'-phosphate from adenosylcobinamide-GDP and alpha-ribazole 5'-phosphate. The chain is Adenosylcobinamide-GDP ribazoletransferase from Rhizobium etli (strain ATCC 51251 / DSM 11541 / JCM 21823 / NBRC 15573 / CFN 42).